The chain runs to 451 residues: Uronate isomerase (451 aa).

Belongs to the metallo-dependent hydrolases superfamily. Uronate isomerase family. As to quaternary structure, homotrimer.

It carries out the reaction D-glucuronate = D-fructuronate. The catalysed reaction is aldehydo-D-galacturonate = keto-D-tagaturonate. The protein operates within carbohydrate metabolism; pentose and glucuronate interconversion. The chain is Uronate isomerase from Thermotoga maritima (strain ATCC 43589 / DSM 3109 / JCM 10099 / NBRC 100826 / MSB8).